Reading from the N-terminus, the 327-residue chain is DNA-directed RNA polymerase subunit alpha (327 aa).

The tract at residues 1–231 is alpha N-terminal domain (alpha-NTD); that stretch reads MIYQMQMPAK…DHVLLFADFS (231 aa). Residues 247–327 are alpha C-terminal domain (alpha-CTD); sequence DEFETMRRLL…GMDITRYQMK (81 aa).

This sequence belongs to the RNA polymerase alpha chain family. In terms of assembly, homodimer. The RNAP catalytic core consists of 2 alpha, 1 beta, 1 beta' and 1 omega subunit. When a sigma factor is associated with the core the holoenzyme is formed, which can initiate transcription.

The enzyme catalyses RNA(n) + a ribonucleoside 5'-triphosphate = RNA(n+1) + diphosphate. In terms of biological role, DNA-dependent RNA polymerase catalyzes the transcription of DNA into RNA using the four ribonucleoside triphosphates as substrates. In Chlorobium chlorochromatii (strain CaD3), this protein is DNA-directed RNA polymerase subunit alpha.